The following is a 313-amino-acid chain: ADP-L-glycero-D-manno-heptose-6-epimerase (313 aa).

NADP(+) is bound by residues 10–11 (MI), 31–32 (DN), Lys-38, Arg-53, 75–79 (EGACS), and Asn-92. Catalysis depends on Tyr-139, which acts as the Proton acceptor. Lys-143 is an NADP(+) binding site. Position 174 (Asn-174) interacts with substrate. Residues Val-175 and Lys-183 each coordinate NADP(+). The active-site Proton acceptor is Lys-183. Residues Ser-185, His-192, 206–209 (FAGS), Arg-214, and Tyr-277 each bind substrate.

It belongs to the NAD(P)-dependent epimerase/dehydratase family. HldD subfamily. In terms of assembly, homopentamer. Requires NADP(+) as cofactor.

It catalyses the reaction ADP-D-glycero-beta-D-manno-heptose = ADP-L-glycero-beta-D-manno-heptose. It participates in nucleotide-sugar biosynthesis; ADP-L-glycero-beta-D-manno-heptose biosynthesis; ADP-L-glycero-beta-D-manno-heptose from D-glycero-beta-D-manno-heptose 7-phosphate: step 4/4. In terms of biological role, catalyzes the interconversion between ADP-D-glycero-beta-D-manno-heptose and ADP-L-glycero-beta-D-manno-heptose via an epimerization at carbon 6 of the heptose. The polypeptide is ADP-L-glycero-D-manno-heptose-6-epimerase (Vibrio campbellii (strain ATCC BAA-1116)).